An 84-amino-acid polypeptide reads, in one-letter code: Large ribosomal subunit protein bL27 (84 aa).

Residues 1–22 are disordered; it reads MAHKKAGGSTRNGRDSESKRLG.

Belongs to the bacterial ribosomal protein bL27 family.

The chain is Large ribosomal subunit protein bL27 from Shewanella pealeana (strain ATCC 700345 / ANG-SQ1).